Reading from the N-terminus, the 188-residue chain is Xanthine phosphoribosyltransferase (188 aa).

Xanthine-binding residues include L20 and N27. 127–131 (AHGEA) is a 5-phospho-alpha-D-ribose 1-diphosphate binding site. Position 155 (K155) interacts with xanthine.

The protein belongs to the purine/pyrimidine phosphoribosyltransferase family. Xpt subfamily. Homodimer.

The protein localises to the cytoplasm. It catalyses the reaction XMP + diphosphate = xanthine + 5-phospho-alpha-D-ribose 1-diphosphate. It functions in the pathway purine metabolism; XMP biosynthesis via salvage pathway; XMP from xanthine: step 1/1. Functionally, converts the preformed base xanthine, a product of nucleic acid breakdown, to xanthosine 5'-monophosphate (XMP), so it can be reused for RNA or DNA synthesis. In Heliobacterium modesticaldum (strain ATCC 51547 / Ice1), this protein is Xanthine phosphoribosyltransferase.